The sequence spans 388 residues: Leucine aminopeptidase 1 (388 aa).

The signal sequence occupies residues 1–19; the sequence is MRVLAAIALGATGLRGALA. Residues 20–88 constitute a propeptide that is removed on maturation; it reads AVVPQEVLGT…YPTLNSASYV (69 aa). 2 N-linked (GlcNAc...) asparagine glycosylation sites follow: asparagine 106 and asparagine 180. Zn(2+) contacts are provided by histidine 188 and aspartate 207. Asparagine 232 is a glycosylation site (N-linked (GlcNAc...) asparagine). Zn(2+) contacts are provided by glutamate 246 and aspartate 273. An intrachain disulfide couples cysteine 322 to cysteine 326. Position 355 (histidine 355) interacts with Zn(2+).

It belongs to the peptidase M28 family. M28E subfamily. In terms of assembly, monomer. It depends on Zn(2+) as a cofactor.

The protein resides in the secreted. Extracellular aminopeptidase that allows assimilation of proteinaceous substrates. The sequence is that of Leucine aminopeptidase 1 (lap1) from Aspergillus clavatus (strain ATCC 1007 / CBS 513.65 / DSM 816 / NCTC 3887 / NRRL 1 / QM 1276 / 107).